Here is a 101-residue protein sequence, read N- to C-terminus: ATP-dependent Clp protease adapter protein ClpS 2 (101 aa).

The protein belongs to the ClpS family. As to quaternary structure, binds to the N-terminal domain of the chaperone ClpA.

Its function is as follows. Involved in the modulation of the specificity of the ClpAP-mediated ATP-dependent protein degradation. The polypeptide is ATP-dependent Clp protease adapter protein ClpS 2 (Mesorhizobium japonicum (strain LMG 29417 / CECT 9101 / MAFF 303099) (Mesorhizobium loti (strain MAFF 303099))).